Reading from the N-terminus, the 267-residue chain is Cytokinesis defective protein 7 (267 aa).

Residues 244–267 form a disordered region; it reads RNQADQSILPPSGDQQHHRSELHA. The span at 258 to 267 shows a compositional bias: basic and acidic residues; it reads QQHHRSELHA.

The sequence is that of Cytokinesis defective protein 7 from Caenorhabditis elegans.